Reading from the N-terminus, the 464-residue chain is ATP synthase subunit beta (464 aa).

G153–T160 is a binding site for ATP.

This sequence belongs to the ATPase alpha/beta chains family. F-type ATPases have 2 components, CF(1) - the catalytic core - and CF(0) - the membrane proton channel. CF(1) has five subunits: alpha(3), beta(3), gamma(1), delta(1), epsilon(1). CF(0) has three main subunits: a(1), b(2) and c(9-12). The alpha and beta chains form an alternating ring which encloses part of the gamma chain. CF(1) is attached to CF(0) by a central stalk formed by the gamma and epsilon chains, while a peripheral stalk is formed by the delta and b chains.

It localises to the cell inner membrane. It catalyses the reaction ATP + H2O + 4 H(+)(in) = ADP + phosphate + 5 H(+)(out). In terms of biological role, produces ATP from ADP in the presence of a proton gradient across the membrane. The catalytic sites are hosted primarily by the beta subunits. In Burkholderia lata (strain ATCC 17760 / DSM 23089 / LMG 22485 / NCIMB 9086 / R18194 / 383), this protein is ATP synthase subunit beta.